The primary structure comprises 376 residues: MVSEQSSNRSHPLDYYMDNQSTDHHTIAEDLEMQLTENDKQRIKSISEQIEPLNHEGLLKYGANLQQKMSHFSHQILDDVQSKDMGPVGETLSQLMGKLKSVNPNDINPEKQSRLKRLFKRTKASINEVFSRMQSVSSQIDRITIQLEKHKDQLTKDVEFLDQLYQENKTYFDNVSLYILAAQKKKKEILTETIPQLREKAHQTGNQMDIQATADMEQFVDRLDKRIYDLQLSRQIAIQTAPQIRMIQNVNQALAEKIQSSILTSIPLWKNQMAIALTLMRQRNAVSAQRSVTDTTNELLTQNASMLKKNAIETAAENERGIVDIETLKTTQNDIIETIEQTLQIQEDGRQKRQVAEKELNELEQDLKQHLLSMRK.

Belongs to the TelA family.

The protein is TelA-like protein SERP0976 of Staphylococcus epidermidis (strain ATCC 35984 / DSM 28319 / BCRC 17069 / CCUG 31568 / BM 3577 / RP62A).